The primary structure comprises 146 residues: Ribosome-binding factor A (146 aa).

Positions 113 to 146 are disordered; sequence IRDEREAQEPAQDPAQDSSQDASVEASDAPDKAE.

The protein belongs to the RbfA family. As to quaternary structure, monomer. Binds 30S ribosomal subunits, but not 50S ribosomal subunits or 70S ribosomes.

It is found in the cytoplasm. In terms of biological role, one of several proteins that assist in the late maturation steps of the functional core of the 30S ribosomal subunit. Associates with free 30S ribosomal subunits (but not with 30S subunits that are part of 70S ribosomes or polysomes). Required for efficient processing of 16S rRNA. May interact with the 5'-terminal helix region of 16S rRNA. The polypeptide is Ribosome-binding factor A (Gemmatimonas aurantiaca (strain DSM 14586 / JCM 11422 / NBRC 100505 / T-27)).